The primary structure comprises 359 residues: Adenosine deaminase (359 aa).

Zn(2+) contacts are provided by histidine 15 and histidine 17. 3 residues coordinate substrate: histidine 17, aspartate 19, and glycine 184. Histidine 213 contributes to the Zn(2+) binding site. Glutamate 216 acts as the Proton donor in catalysis. Aspartate 295 provides a ligand contact to Zn(2+). A substrate-binding site is contributed by aspartate 296.

This sequence belongs to the metallo-dependent hydrolases superfamily. Adenosine and AMP deaminases family. Requires Zn(2+) as cofactor.

It localises to the cell membrane. Its subcellular location is the cell junction. The protein localises to the cytoplasmic vesicle lumen. It is found in the cytoplasm. The protein resides in the lysosome. It carries out the reaction adenosine + H2O + H(+) = inosine + NH4(+). It catalyses the reaction 2'-deoxyadenosine + H2O + H(+) = 2'-deoxyinosine + NH4(+). Functionally, catalyzes the hydrolytic deamination of adenosine and 2-deoxyadenosine. Plays an important role in purine metabolism and in adenosine homeostasis. Modulates signaling by extracellular adenosine, and so contributes indirectly to cellular signaling events. May act as a positive regulator of T-cell coactivation. The sequence is that of Adenosine deaminase (ada) from Danio rerio (Zebrafish).